The sequence spans 292 residues: 4-hydroxy-tetrahydrodipicolinate synthase (292 aa).

Thr-45 lines the pyruvate pocket. The active-site Proton donor/acceptor is the Tyr-133. Lys-161 functions as the Schiff-base intermediate with substrate in the catalytic mechanism. Ile-203 serves as a coordination point for pyruvate.

It belongs to the DapA family. As to quaternary structure, homotetramer; dimer of dimers.

It is found in the cytoplasm. The catalysed reaction is L-aspartate 4-semialdehyde + pyruvate = (2S,4S)-4-hydroxy-2,3,4,5-tetrahydrodipicolinate + H2O + H(+). It functions in the pathway amino-acid biosynthesis; L-lysine biosynthesis via DAP pathway; (S)-tetrahydrodipicolinate from L-aspartate: step 3/4. Catalyzes the condensation of (S)-aspartate-beta-semialdehyde [(S)-ASA] and pyruvate to 4-hydroxy-tetrahydrodipicolinate (HTPA). The chain is 4-hydroxy-tetrahydrodipicolinate synthase from Herminiimonas arsenicoxydans.